Consider the following 438-residue polypeptide: Protein ROOT INITIATION DEFECTIVE 3 (438 aa).

WD repeat units follow at residues 36-74 (AHGL…AEVK), 76-115 (YPVE…LLKK), 118-157 (GHYR…DDFQ), 171-212 (EHTM…LLKN), 214-253 (IFPS…EYGT), and 261-300 (EKGK…HVRT). The stretch at 394–434 (AATEMEMERLKLEYKRSLQMNEQWQKNYENLLQVVMEEEQI) forms a coiled coil.

Involved in meristem development. Acts as a negative regulator of the CUC-STM pathway in shoot apical meristem (SAM) neo-formation. The sequence is that of Protein ROOT INITIATION DEFECTIVE 3 (RID3) from Arabidopsis thaliana (Mouse-ear cress).